The chain runs to 231 residues: ATP phosphoribosyltransferase (231 aa).

This sequence belongs to the ATP phosphoribosyltransferase family. Short subfamily. In terms of assembly, heteromultimer composed of HisG and HisZ subunits.

It is found in the cytoplasm. The enzyme catalyses 1-(5-phospho-beta-D-ribosyl)-ATP + diphosphate = 5-phospho-alpha-D-ribose 1-diphosphate + ATP. It functions in the pathway amino-acid biosynthesis; L-histidine biosynthesis; L-histidine from 5-phospho-alpha-D-ribose 1-diphosphate: step 1/9. Its function is as follows. Catalyzes the condensation of ATP and 5-phosphoribose 1-diphosphate to form N'-(5'-phosphoribosyl)-ATP (PR-ATP). Has a crucial role in the pathway because the rate of histidine biosynthesis seems to be controlled primarily by regulation of HisG enzymatic activity. This chain is ATP phosphoribosyltransferase, found in Brucella anthropi (strain ATCC 49188 / DSM 6882 / CCUG 24695 / JCM 21032 / LMG 3331 / NBRC 15819 / NCTC 12168 / Alc 37) (Ochrobactrum anthropi).